Reading from the N-terminus, the 297-residue chain is Small ribosomal subunit biogenesis GTPase RsgA (297 aa).

Residues T65 to I223 enclose the CP-type G domain. GTP-binding positions include S114–D117 and G166–T174. 4 residues coordinate Zn(2+): C247, C252, H254, and C260.

It belongs to the TRAFAC class YlqF/YawG GTPase family. RsgA subfamily. As to quaternary structure, monomer. Associates with 30S ribosomal subunit, binds 16S rRNA. Requires Zn(2+) as cofactor.

Its subcellular location is the cytoplasm. One of several proteins that assist in the late maturation steps of the functional core of the 30S ribosomal subunit. Helps release RbfA from mature subunits. May play a role in the assembly of ribosomal proteins into the subunit. Circularly permuted GTPase that catalyzes slow GTP hydrolysis, GTPase activity is stimulated by the 30S ribosomal subunit. This chain is Small ribosomal subunit biogenesis GTPase RsgA, found in Lactobacillus gasseri (strain ATCC 33323 / DSM 20243 / BCRC 14619 / CIP 102991 / JCM 1131 / KCTC 3163 / NCIMB 11718 / NCTC 13722 / AM63).